Here is a 514-residue protein sequence, read N- to C-terminus: Alpha-1B adrenergic receptor (514 aa).

Over 1 to 45 the chain is Extracellular; sequence MNPDLDTGHNTSAPAHWGELKDANFTGPNQTSSNSTLPQLDVTRA. N-linked (GlcNAc...) asparagine glycans are attached at residues asparagine 10, asparagine 24, asparagine 29, and asparagine 34. A helical transmembrane segment spans residues 46–69; sequence ISVGCLGAFILFAIVGNILVILSV. Over 70–82 the chain is Cytoplasmic; sequence ACNRHLRTPTNYF. Residues 83-104 traverse the membrane as a helical segment; that stretch reads IVNLAIADLLLSFTDLPFSATL. The Extracellular portion of the chain corresponds to 105-114; it reads EVLGYWVLGR. The helical transmembrane segment at 115 to 140 threads the bilayer; the sequence is IFCDIWAAVDVLCCTASILSLCAISI. A disulfide bridge connects residues cysteine 117 and cysteine 194. Over 141–160 the chain is Cytoplasmic; that stretch reads DRYIGVRYSLQYPTLVTRRK. Residues 161 to 183 traverse the membrane as a helical segment; sequence AILALLSVWVLSTVISIGPLLGW. At 184-200 the chain is on the extracellular side; that stretch reads KEPAPNDDKECGVTEEP. Residues 201-223 traverse the membrane as a helical segment; the sequence is FYALFSSLGSFYIPLAVILVMYC. Residues 224-294 are Cytoplasmic-facing; it reads RVYIVAKRTT…FSREKKAAKT (71 aa). The residue at position 263 (threonine 263) is a Phosphothreonine. A helical membrane pass occupies residues 295–318; it reads LGIVVGMFILCWLPFFIALPLGSL. Over 319-325 the chain is Extracellular; it reads FSTLKPP. Residues 326-350 form a helical membrane-spanning segment; the sequence is DAVFKVVFWLGYFNSCLNPIIYPCS. Residues 351–514 are Cytoplasmic-facing; the sequence is SKEFKRAFMR…SNMPLAPGHF (164 aa). Cysteine 364 is lipidated: S-palmitoyl cysteine. The Nuclear localization signal signature appears at 367–377; the sequence is RGGRRRRRRRR. 2 disordered regions span residues 391–429 and 473–514; these read GGSL…GYLG and LGEP…PGHF. Residues 409–423 show a composition bias toward polar residues; sequence SCMSGSQRTLPSASP.

The protein belongs to the G-protein coupled receptor 1 family. Adrenergic receptor subfamily. ADRA1B sub-subfamily. In terms of assembly, homo- and heterooligomer. Heterooligomerizes with ADRA1B homooligomers in cardiac myocytes. Interacts with CAVIN4.

It is found in the nucleus membrane. The protein localises to the cell membrane. It localises to the cytoplasm. Its subcellular location is the membrane. The protein resides in the caveola. This alpha-adrenergic receptor mediates its action by association with G proteins that activate a phosphatidylinositol-calcium second messenger system. Its effect is mediated by G(q) and G(11) proteins. Nuclear ADRA1A-ADRA1B heterooligomers regulate phenylephrine (PE)-stimulated ERK signaling in cardiac myocytes. The polypeptide is Alpha-1B adrenergic receptor (Adra1b) (Mus musculus (Mouse)).